The primary structure comprises 71 residues: Protein translocase subunit SecE (71 aa).

A helical membrane pass occupies residues 43-63 (VAGAGILAVGAIGFIIYVLLT).

It belongs to the SecE/SEC61-gamma family. In terms of assembly, component of the Sec protein translocase complex. Heterotrimer consisting of SecY (alpha), SecG (beta) and SecE (gamma) subunits. The heterotrimers can form oligomers, although 1 heterotrimer is thought to be able to translocate proteins. Interacts with the ribosome. May interact with SecDF, and other proteins may be involved.

Its subcellular location is the cell membrane. In terms of biological role, essential subunit of the Sec protein translocation channel SecYEG. Clamps together the 2 halves of SecY. May contact the channel plug during translocation. The chain is Protein translocase subunit SecE from Methanosarcina acetivorans (strain ATCC 35395 / DSM 2834 / JCM 12185 / C2A).